Reading from the N-terminus, the 349-residue chain is MSDRKAALDMALRQIEKQFGKGSIMKLGEQAEQRVSTISSGALALDIALGVGGYPRGRVIEVYGPESSGKTTVALHAIAEVQRNGGQAAFIDAEHALDPVYAKKLGVNIDELLLSQPDTGEQALEIAEALVRSGAIDVIVIDSVAALVPKAEIEGEMGDSHVGLQARLMSQALRKLSGAINKSKTIAIFINQIREKVGVMFGNPETTPGGRALKFYSSVRLEVRRAETLKQGNDMVGNKTKIKVVKNKVAPPFKQAEVDIMYGEGISREGSILDIASELDIVQKSGAWYSFNDERLGQGRENAKQFLKENPEAAEEIESRIREHYGLNGEIEVEAPSEEEFEDLPLDLK.

64 to 71 (GPESSGKT) serves as a coordination point for ATP. Residues 328–349 (NGEIEVEAPSEEEFEDLPLDLK) form a disordered region. The segment covering 331-349 (IEVEAPSEEEFEDLPLDLK) has biased composition (acidic residues).

It belongs to the RecA family.

The protein resides in the cytoplasm. Functionally, can catalyze the hydrolysis of ATP in the presence of single-stranded DNA, the ATP-dependent uptake of single-stranded DNA by duplex DNA, and the ATP-dependent hybridization of homologous single-stranded DNAs. It interacts with LexA causing its activation and leading to its autocatalytic cleavage. This Halalkalibacterium halodurans (strain ATCC BAA-125 / DSM 18197 / FERM 7344 / JCM 9153 / C-125) (Bacillus halodurans) protein is Protein RecA.